An 85-amino-acid chain; its full sequence is Small ribosomal subunit protein bS16 (85 aa).

Belongs to the bacterial ribosomal protein bS16 family.

In Metamycoplasma arthritidis (strain 158L3-1) (Mycoplasma arthritidis), this protein is Small ribosomal subunit protein bS16.